A 60-amino-acid polypeptide reads, in one-letter code: uncharacterized protein (60 aa).

Residues 1 to 21 (MNKLLKLFFITIIIYNNIAFA) form the signal peptide.

This is an uncharacterized protein from Rickettsia prowazekii (strain Madrid E).